The chain runs to 94 residues: Large ribosomal subunit protein bL27 (94 aa).

A propeptide spanning residues 1-9 (MLKLNLQFF) is cleaved from the precursor.

This sequence belongs to the bacterial ribosomal protein bL27 family. In terms of processing, the N-terminus is cleaved by ribosomal processing cysteine protease Prp.

This chain is Large ribosomal subunit protein bL27, found in Staphylococcus epidermidis (strain ATCC 35984 / DSM 28319 / BCRC 17069 / CCUG 31568 / BM 3577 / RP62A).